Here is a 233-residue protein sequence, read N- to C-terminus: tRNA (guanine-N(7)-)-methyltransferase (233 aa).

Residues M1 to P22 form a disordered region. Residues E64, E89, D116, and D138 each coordinate S-adenosyl-L-methionine. Residue D138 is part of the active site. Substrate is bound by residues K142, D174, and T212 to E215.

Belongs to the class I-like SAM-binding methyltransferase superfamily. TrmB family.

It catalyses the reaction guanosine(46) in tRNA + S-adenosyl-L-methionine = N(7)-methylguanosine(46) in tRNA + S-adenosyl-L-homocysteine. It participates in tRNA modification; N(7)-methylguanine-tRNA biosynthesis. Its function is as follows. Catalyzes the formation of N(7)-methylguanine at position 46 (m7G46) in tRNA. This is tRNA (guanine-N(7)-)-methyltransferase from Brucella melitensis biotype 1 (strain ATCC 23456 / CCUG 17765 / NCTC 10094 / 16M).